A 701-amino-acid polypeptide reads, in one-letter code: Interleukin-1 receptor accessory protein-like 1-A (701 aa).

Residues 1–19 (MTALNPVLFLLCGVSVSLS) form the signal peptide. Residues 20 to 361 (LKVVSKRGSV…IGKRVELMYT (342 aa)) are Extracellular-facing. The Ig-like C2-type 1 domain maps to 33–133 (TDWSVDYLKY…RNSTFCMKVS (101 aa)). The cysteines at positions 54 and 121 are disulfide-linked. Residues N64, N125, N141, N216, N267, and N334 are each glycosylated (N-linked (GlcNAc...) asparagine). Ig-like C2-type domains follow at residues 146–235 (CYNS…TYLS) and 245–353 (PRIL…VQIG). C167 and C219 are oxidised to a cystine. C270 and C337 are disulfide-bonded. The chain crosses the membrane as a helical span at residues 362 to 382 (VELAGGLGAILLLLALLLSVY). Topologically, residues 383–701 (KCYRIELLLC…RETSISSVIW (319 aa)) are cytoplasmic. A TIR domain is found at 407-563 (KEYDAYLSYS…RFWKQLRYTM (157 aa)). E495 is an active-site residue. Residues 568–701 (PQQTITNHAL…RETSISSVIW (134 aa)) are required for synaptic vesicle accumulation during synaptogenesis.

The protein belongs to the interleukin-1 receptor family.

It localises to the cell membrane. It is found in the cytoplasm. The enzyme catalyses NAD(+) + H2O = ADP-D-ribose + nicotinamide + H(+). May regulate secretion and presynaptic differentiation through inhibition of the activity of N-type voltage-gated calcium channel. During presynaptic differentiation may regulate both synaptic vesicle accumulation in axon terminals and subsequent axon terminal remodeling. The polypeptide is Interleukin-1 receptor accessory protein-like 1-A (il1rapl1a) (Danio rerio (Zebrafish)).